We begin with the raw amino-acid sequence, 246 residues long: 3-deoxy-manno-octulosonate cytidylyltransferase (246 aa).

Belongs to the KdsB family.

The protein resides in the cytoplasm. It carries out the reaction 3-deoxy-alpha-D-manno-oct-2-ulosonate + CTP = CMP-3-deoxy-beta-D-manno-octulosonate + diphosphate. Its pathway is nucleotide-sugar biosynthesis; CMP-3-deoxy-D-manno-octulosonate biosynthesis; CMP-3-deoxy-D-manno-octulosonate from 3-deoxy-D-manno-octulosonate and CTP: step 1/1. It functions in the pathway bacterial outer membrane biogenesis; lipopolysaccharide biosynthesis. In terms of biological role, activates KDO (a required 8-carbon sugar) for incorporation into bacterial lipopolysaccharide in Gram-negative bacteria. The protein is 3-deoxy-manno-octulosonate cytidylyltransferase of Leptospira biflexa serovar Patoc (strain Patoc 1 / Ames).